A 229-amino-acid chain; its full sequence is Flagellar L-ring protein (229 aa).

The N-terminal stretch at 1–23 (MLSRLGARVLYCLAGLALLASGG) is a signal peptide. C24 carries N-palmitoyl cysteine lipidation. The S-diacylglycerol cysteine moiety is linked to residue C24.

It belongs to the FlgH family. As to quaternary structure, the basal body constitutes a major portion of the flagellar organelle and consists of four rings (L,P,S, and M) mounted on a central rod.

Its subcellular location is the cell outer membrane. The protein localises to the bacterial flagellum basal body. Assembles around the rod to form the L-ring and probably protects the motor/basal body from shearing forces during rotation. The sequence is that of Flagellar L-ring protein from Cupriavidus pinatubonensis (strain JMP 134 / LMG 1197) (Cupriavidus necator (strain JMP 134)).